The following is a 256-amino-acid chain: Small ribosomal subunit protein eS1 (256 aa).

Over residues 1 to 18 (MAVGKNKRLSKGKKGLKK) the composition is skewed to basic residues. Positions 1–20 (MAVGKNKRLSKGKKGLKKRT) are disordered. An N-acetylalanine; partial modification is found at A2.

The protein belongs to the eukaryotic ribosomal protein eS1 family. Component of the small ribosomal subunit. Mature ribosomes consist of a small (40S) and a large (60S) subunit. The 40S subunit contains about 33 different proteins and 1 molecule of RNA (18S). The 60S subunit contains about 49 different proteins and 3 molecules of RNA (25S, 5.8S and 5S).

The protein localises to the cytoplasm. In Talaromyces marneffei (strain ATCC 18224 / CBS 334.59 / QM 7333) (Penicillium marneffei), this protein is Small ribosomal subunit protein eS1 (rps1).